Reading from the N-terminus, the 326-residue chain is 4-hydroxy-3-methylbut-2-enyl diphosphate reductase (326 aa).

Position 22 (Cys-22) interacts with [4Fe-4S] cluster. (2E)-4-hydroxy-3-methylbut-2-enyl diphosphate is bound by residues His-51 and His-84. Dimethylallyl diphosphate is bound by residues His-51 and His-84. Isopentenyl diphosphate contacts are provided by His-51 and His-84. Cys-106 contacts [4Fe-4S] cluster. His-134 lines the (2E)-4-hydroxy-3-methylbut-2-enyl diphosphate pocket. His-134 lines the dimethylallyl diphosphate pocket. His-134 provides a ligand contact to isopentenyl diphosphate. Residue Glu-136 is the Proton donor of the active site. Thr-174 serves as a coordination point for (2E)-4-hydroxy-3-methylbut-2-enyl diphosphate. Residue Cys-204 participates in [4Fe-4S] cluster binding. Ser-232, Ser-233, Asn-234, and Ser-276 together coordinate (2E)-4-hydroxy-3-methylbut-2-enyl diphosphate. The dimethylallyl diphosphate site is built by Ser-232, Ser-233, Asn-234, and Ser-276. Residues Ser-232, Ser-233, Asn-234, and Ser-276 each coordinate isopentenyl diphosphate.

It belongs to the IspH family. Requires [4Fe-4S] cluster as cofactor.

It carries out the reaction isopentenyl diphosphate + 2 oxidized [2Fe-2S]-[ferredoxin] + H2O = (2E)-4-hydroxy-3-methylbut-2-enyl diphosphate + 2 reduced [2Fe-2S]-[ferredoxin] + 2 H(+). The enzyme catalyses dimethylallyl diphosphate + 2 oxidized [2Fe-2S]-[ferredoxin] + H2O = (2E)-4-hydroxy-3-methylbut-2-enyl diphosphate + 2 reduced [2Fe-2S]-[ferredoxin] + 2 H(+). Its pathway is isoprenoid biosynthesis; dimethylallyl diphosphate biosynthesis; dimethylallyl diphosphate from (2E)-4-hydroxy-3-methylbutenyl diphosphate: step 1/1. The protein operates within isoprenoid biosynthesis; isopentenyl diphosphate biosynthesis via DXP pathway; isopentenyl diphosphate from 1-deoxy-D-xylulose 5-phosphate: step 6/6. Its function is as follows. Catalyzes the conversion of 1-hydroxy-2-methyl-2-(E)-butenyl 4-diphosphate (HMBPP) into a mixture of isopentenyl diphosphate (IPP) and dimethylallyl diphosphate (DMAPP). Acts in the terminal step of the DOXP/MEP pathway for isoprenoid precursor biosynthesis. This Bordetella bronchiseptica (strain ATCC BAA-588 / NCTC 13252 / RB50) (Alcaligenes bronchisepticus) protein is 4-hydroxy-3-methylbut-2-enyl diphosphate reductase.